The chain runs to 299 residues: Leucine zipper transcription factor-like protein 1 (299 aa).

Residues 96-296 (LKLQTDISEL…DLRKRLAKYE (201 aa)) are a coiled coil. Residues 145–299 (GAAELLNKEI…KRLAKYEPED (155 aa)) form an interaction with BSS9 region.

It belongs to the LZTFL1 family. As to quaternary structure, self-associates. Interacts with BBS9; the interaction mediates the association of LZTL1 with the BBsome complex and regulates BBSome ciliary trafficking.

The protein localises to the cytoplasm. In terms of biological role, regulates ciliary localization of the BBSome complex. Together with the BBSome complex, controls SMO ciliary trafficking and contributes to the sonic hedgehog (SHH) pathway regulation. May play a role in neurite outgrowth. May have tumor suppressor function. The polypeptide is Leucine zipper transcription factor-like protein 1 (LZTFL1) (Bos taurus (Bovine)).